A 152-amino-acid chain; its full sequence is Transcriptional regulator MraZ (152 aa).

SpoVT-AbrB domains are found at residues 5–52 (ATLV…PLPE) and 81–124 (ASEC…DETT).

Belongs to the MraZ family. As to quaternary structure, forms oligomers.

It is found in the cytoplasm. Its subcellular location is the nucleoid. Negatively regulates its own expression and that of the subsequent genes in the proximal part of the division and cell wall (dcw) gene cluster. Acts by binding directly to DNA. May also regulate the expression of genes outside the dcw cluster. This Shigella sonnei (strain Ss046) protein is Transcriptional regulator MraZ.